The primary structure comprises 176 residues: Shikimate kinase (176 aa).

14-19 (GAGKST) serves as a coordination point for ATP. S18 is a binding site for Mg(2+). Substrate contacts are provided by D36, R60, and G83. R121 contacts ATP. R140 contacts substrate.

The protein belongs to the shikimate kinase family. As to quaternary structure, monomer. The cofactor is Mg(2+).

The protein resides in the cytoplasm. It carries out the reaction shikimate + ATP = 3-phosphoshikimate + ADP + H(+). It participates in metabolic intermediate biosynthesis; chorismate biosynthesis; chorismate from D-erythrose 4-phosphate and phosphoenolpyruvate: step 5/7. Its function is as follows. Catalyzes the specific phosphorylation of the 3-hydroxyl group of shikimic acid using ATP as a cosubstrate. This is Shikimate kinase from Francisella tularensis subsp. tularensis (strain FSC 198).